Reading from the N-terminus, the 127-residue chain is UPF0325 protein ASA_3165 (127 aa).

This sequence belongs to the UPF0325 family.

The protein is UPF0325 protein ASA_3165 of Aeromonas salmonicida (strain A449).